We begin with the raw amino-acid sequence, 234 residues long: Demethylmenaquinone methyltransferase (234 aa).

Residues Thr-62, Asp-80, 100–101 (DA), and Ser-117 each bind S-adenosyl-L-methionine.

Belongs to the class I-like SAM-binding methyltransferase superfamily. MenG/UbiE family.

It carries out the reaction a 2-demethylmenaquinol + S-adenosyl-L-methionine = a menaquinol + S-adenosyl-L-homocysteine + H(+). Its pathway is quinol/quinone metabolism; menaquinone biosynthesis; menaquinol from 1,4-dihydroxy-2-naphthoate: step 2/2. Functionally, methyltransferase required for the conversion of demethylmenaquinol (DMKH2) to menaquinol (MKH2). This Mycobacterium bovis (strain ATCC BAA-935 / AF2122/97) protein is Demethylmenaquinone methyltransferase.